The sequence spans 603 residues: ATP-dependent zinc metalloprotease FtsH (603 aa).

At 1–2 the chain is on the stromal side; the sequence is MK. Residues 3–23 traverse the membrane as a helical segment; that stretch reads NLWIWSLPLIVLAFIGWQELA. The Lumenal portion of the chain corresponds to 24–101; the sequence is NQMPVATSRM…DVDVHAVSNW (78 aa). The chain crosses the membrane as a helical span at residues 102–122; the sequence is INVASNWIIPLIIIGVVIWLL. At 123-603 the chain is on the stromal side; the sequence is SRSASSNTTG…SQAARLTAVN (481 aa). Position 194 to 201 (194 to 201) interacts with ATP; it reads GPPGTGKT. Residue His415 participates in Zn(2+) binding. Residue Glu416 is part of the active site. Zn(2+)-binding residues include His419 and Asp493.

This sequence in the central section; belongs to the AAA ATPase family. In the C-terminal section; belongs to the peptidase M41 family. Homohexamer. It depends on Zn(2+) as a cofactor.

Its subcellular location is the plastid. It is found in the chloroplast thylakoid membrane. In terms of biological role, acts as a processive, ATP-dependent zinc metallopeptidase. The protein is ATP-dependent zinc metalloprotease FtsH of Cyanidioschyzon merolae (strain NIES-3377 / 10D) (Unicellular red alga).